The following is a 285-amino-acid chain: Chromatin modification-related protein YNG2 (285 aa).

Residues 19–54 (LEVKHLLQELKNKDVQLQEARKRYQTKDNQIHKFIR) are a coiled coil. The span at 138-165 (NGLSDNLSGTTTPRGHSASTPVADNAAN) shows a compositional bias: polar residues. Residues 138 to 218 (NGLSDNLSGT…SRPNEGPGNN (81 aa)) form a disordered region. A compositionally biased stretch (basic and acidic residues) spans 193-207 (MKSEDFEDKKYDNDS). Residues 225–276 (NLYCFCQRVSFGEMIGCDNDDCKFEWFHWSCVGITAPPKDDEIWYCPDCAPK) form a PHD-type zinc finger. Zn(2+) is bound by residues Cys228, Cys230, Cys241, Cys246, His252, Cys255, Cys270, and Cys273.

It belongs to the ING family. Interacts with H3K4me3 and to a lesser extent with H3K4me2. Component of the NuA4 histone acetyltransferase complex.

The protein resides in the nucleus. In terms of biological role, component of the NuA4 histone acetyltransferase complex which is involved in transcriptional activation of selected genes principally by acetylation of nucleosomal histone H4 and H2A. The NuA4 complex is also involved in DNA repair. Involved in cell cycle progression and meiosis. The chain is Chromatin modification-related protein YNG2 (YNG2) from Debaryomyces hansenii (strain ATCC 36239 / CBS 767 / BCRC 21394 / JCM 1990 / NBRC 0083 / IGC 2968) (Yeast).